We begin with the raw amino-acid sequence, 456 residues long: Trigger factor (456 aa).

Residues glycine 192–proline 277 form the PPIase FKBP-type domain.

It belongs to the FKBP-type PPIase family. Tig subfamily.

It localises to the cytoplasm. It carries out the reaction [protein]-peptidylproline (omega=180) = [protein]-peptidylproline (omega=0). In terms of biological role, involved in protein export. Acts as a chaperone by maintaining the newly synthesized protein in an open conformation. Functions as a peptidyl-prolyl cis-trans isomerase. In Streptococcus pyogenes serotype M2 (strain MGAS10270), this protein is Trigger factor.